The primary structure comprises 265 residues: Orotidine 5'-phosphate decarboxylase (265 aa).

Residues D38, 60-62 (KTH), 91-100 (DRKFADIGNT), Y213, and R232 contribute to the substrate site. Residue K93 is the Proton donor of the active site.

The protein belongs to the OMP decarboxylase family.

It carries out the reaction orotidine 5'-phosphate + H(+) = UMP + CO2. Its pathway is pyrimidine metabolism; UMP biosynthesis via de novo pathway; UMP from orotate: step 2/2. This is Orotidine 5'-phosphate decarboxylase (pyrG) from Rhizopus oryzae (Mucormycosis agent).